Reading from the N-terminus, the 86-residue chain is Small ribosomal subunit protein bS20 (86 aa).

A disordered region spans residues 1–25 (MANIKSAIKRAKTSEKRRVANSQEK).

The protein belongs to the bacterial ribosomal protein bS20 family.

In terms of biological role, binds directly to 16S ribosomal RNA. The sequence is that of Small ribosomal subunit protein bS20 from Exiguobacterium sp. (strain ATCC BAA-1283 / AT1b).